The sequence spans 100 residues: Small ribosomal subunit protein uS14c (100 aa).

This sequence belongs to the universal ribosomal protein uS14 family. Part of the 30S ribosomal subunit.

The protein resides in the plastid. It localises to the chloroplast. Its function is as follows. Binds 16S rRNA, required for the assembly of 30S particles. The protein is Small ribosomal subunit protein uS14c of Gossypium barbadense (Sea Island cotton).